The chain runs to 347 residues: Holliday junction branch migration complex subunit RuvB (347 aa).

The segment at 1–186 (MKDENSISFL…FGITARFELY (186 aa)) is large ATPase domain (RuvB-L). ATP contacts are provided by residues leucine 25, arginine 26, glycine 67, lysine 70, threonine 71, threonine 72, 133–135 (EDY), arginine 176, tyrosine 186, and arginine 223. A Mg(2+)-binding site is contributed by threonine 71. Residues 187–257 (SEIELVEIIK…IVSIGLEMLR (71 aa)) form a small ATPAse domain (RuvB-S) region. The interval 260–347 (GEGLDEQDRN…GLNENQRVSF (88 aa)) is head domain (RuvB-H). Residues arginine 315 and arginine 320 each coordinate DNA.

Belongs to the RuvB family. In terms of assembly, homohexamer. Forms an RuvA(8)-RuvB(12)-Holliday junction (HJ) complex. HJ DNA is sandwiched between 2 RuvA tetramers; dsDNA enters through RuvA and exits via RuvB. An RuvB hexamer assembles on each DNA strand where it exits the tetramer. Each RuvB hexamer is contacted by two RuvA subunits (via domain III) on 2 adjacent RuvB subunits; this complex drives branch migration. In the full resolvosome a probable DNA-RuvA(4)-RuvB(12)-RuvC(2) complex forms which resolves the HJ.

The protein resides in the cytoplasm. It catalyses the reaction ATP + H2O = ADP + phosphate + H(+). Its function is as follows. The RuvA-RuvB-RuvC complex processes Holliday junction (HJ) DNA during genetic recombination and DNA repair, while the RuvA-RuvB complex plays an important role in the rescue of blocked DNA replication forks via replication fork reversal (RFR). RuvA specifically binds to HJ cruciform DNA, conferring on it an open structure. The RuvB hexamer acts as an ATP-dependent pump, pulling dsDNA into and through the RuvAB complex. RuvB forms 2 homohexamers on either side of HJ DNA bound by 1 or 2 RuvA tetramers; 4 subunits per hexamer contact DNA at a time. Coordinated motions by a converter formed by DNA-disengaged RuvB subunits stimulates ATP hydrolysis and nucleotide exchange. Immobilization of the converter enables RuvB to convert the ATP-contained energy into a lever motion, pulling 2 nucleotides of DNA out of the RuvA tetramer per ATP hydrolyzed, thus driving DNA branch migration. The RuvB motors rotate together with the DNA substrate, which together with the progressing nucleotide cycle form the mechanistic basis for DNA recombination by continuous HJ branch migration. Branch migration allows RuvC to scan DNA until it finds its consensus sequence, where it cleaves and resolves cruciform DNA. The chain is Holliday junction branch migration complex subunit RuvB from Borreliella burgdorferi (strain ATCC 35210 / DSM 4680 / CIP 102532 / B31) (Borrelia burgdorferi).